The sequence spans 176 residues: Protein FimF (176 aa).

Residues 1–20 (MRNKPFYLLCAFLWLAVSHA) form the signal peptide. A disulfide bridge connects residues Cys38 and Cys78.

Belongs to the fimbrial protein family.

The protein resides in the fimbrium. Its function is as follows. Involved in regulation of length and mediation of adhesion of type 1 fimbriae (but not necessary for the production of fimbriae). Involved in the integration of FimH in the fimbriae. The sequence is that of Protein FimF (fimF) from Escherichia coli (strain K12).